The chain runs to 506 residues: ATP synthase subunit alpha (506 aa).

172–179 provides a ligand contact to ATP; the sequence is GDRKTGKT.

The protein belongs to the ATPase alpha/beta chains family. F-type ATPases have 2 components, CF(1) - the catalytic core - and CF(0) - the membrane proton channel. CF(1) has five subunits: alpha(3), beta(3), gamma(1), delta(1), epsilon(1). CF(0) has three main subunits: a(1), b(2) and c(9-12). The alpha and beta chains form an alternating ring which encloses part of the gamma chain. CF(1) is attached to CF(0) by a central stalk formed by the gamma and epsilon chains, while a peripheral stalk is formed by the delta and b chains.

The protein resides in the cell membrane. It catalyses the reaction ATP + H2O + 4 H(+)(in) = ADP + phosphate + 5 H(+)(out). Its function is as follows. Produces ATP from ADP in the presence of a proton gradient across the membrane. The alpha chain is a regulatory subunit. This is ATP synthase subunit alpha from Lactobacillus gasseri (strain ATCC 33323 / DSM 20243 / BCRC 14619 / CIP 102991 / JCM 1131 / KCTC 3163 / NCIMB 11718 / NCTC 13722 / AM63).